The following is a 280-amino-acid chain: 3-dehydroshikimate dehydratase (280 aa).

Substrate contacts are provided by tyrosine 70, arginine 102, and glutamate 142. Glutamate 142 contributes to the Mn(2+) binding site. The active-site Proton acceptor is the histidine 144. The substrate site is built by aspartate 172 and histidine 175. Aspartate 172 serves as a coordination point for Mn(2+). A Mn(2+)-binding site is contributed by histidine 198. Residues tyrosine 217 and glutamate 253 each contribute to the substrate site. Residue glutamate 253 coordinates Mn(2+).

In terms of assembly, homodimer. It depends on Mn(2+) as a cofactor.

The catalysed reaction is 3-dehydroshikimate = 3,4-dihydroxybenzoate + H2O. It functions in the pathway aromatic compound metabolism; 3,4-dihydroxybenzoate biosynthesis; 3,4-dihydroxybenzoate from 3-dehydroquinate: step 2/2. It participates in siderophore biosynthesis; petrobactin biosynthesis. Involved in the biosynthesis of petrobactin, a catecholate siderophore that functions in both iron acquisition and virulence. Catalyzes the conversion of 3-dehydroshikimate to 3,4-dihydroxybenzoate (3,4-DHBA). In Bacillus anthracis, this protein is 3-dehydroshikimate dehydratase.